The primary structure comprises 505 residues: 2,3-bisphosphoglycerate-independent phosphoglycerate mutase (505 aa).

The Mn(2+) site is built by D12 and S62. The active-site Phosphoserine intermediate is the S62. Substrate-binding positions include H123, 153-154 (RD), R185, R191, 257-260 (RPDR), and K330. Residues D397, H401, D438, H439, and H456 each coordinate Mn(2+).

The protein belongs to the BPG-independent phosphoglycerate mutase family. In terms of assembly, monomer. The cofactor is Mn(2+).

The enzyme catalyses (2R)-2-phosphoglycerate = (2R)-3-phosphoglycerate. It participates in carbohydrate degradation; glycolysis; pyruvate from D-glyceraldehyde 3-phosphate: step 3/5. Its function is as follows. Catalyzes the interconversion of 2-phosphoglycerate and 3-phosphoglycerate. This is 2,3-bisphosphoglycerate-independent phosphoglycerate mutase from Staphylococcus epidermidis (strain ATCC 35984 / DSM 28319 / BCRC 17069 / CCUG 31568 / BM 3577 / RP62A).